The sequence spans 389 residues: Phospho-N-acetylmuramoyl-pentapeptide-transferase (389 aa).

10 consecutive transmembrane segments (helical) span residues 25 to 45, 73 to 93, 97 to 117, 135 to 155, 190 to 210, 222 to 242, 258 to 278, 286 to 306, 311 to 331, and 366 to 386; these read RAVM…PWVI, TMGG…WGDL, FIWI…VDDY, FWQS…VSEA, ISYP…IVGA, GLVI…AYVM, GAGE…AFLW, VFMG…VAVI, IVLF…MLQV, and QVVV…LSTL.

The protein belongs to the glycosyltransferase 4 family. MraY subfamily. Mg(2+) is required as a cofactor.

The protein resides in the cell inner membrane. It catalyses the reaction UDP-N-acetyl-alpha-D-muramoyl-L-alanyl-gamma-D-glutamyl-meso-2,6-diaminopimeloyl-D-alanyl-D-alanine + di-trans,octa-cis-undecaprenyl phosphate = di-trans,octa-cis-undecaprenyl diphospho-N-acetyl-alpha-D-muramoyl-L-alanyl-D-glutamyl-meso-2,6-diaminopimeloyl-D-alanyl-D-alanine + UMP. It functions in the pathway cell wall biogenesis; peptidoglycan biosynthesis. In terms of biological role, catalyzes the initial step of the lipid cycle reactions in the biosynthesis of the cell wall peptidoglycan: transfers peptidoglycan precursor phospho-MurNAc-pentapeptide from UDP-MurNAc-pentapeptide onto the lipid carrier undecaprenyl phosphate, yielding undecaprenyl-pyrophosphoryl-MurNAc-pentapeptide, known as lipid I. This Burkholderia mallei (strain NCTC 10247) protein is Phospho-N-acetylmuramoyl-pentapeptide-transferase.